The primary structure comprises 582 residues: Potassium voltage-gated channel subfamily KQT member 1 (582 aa).

Over 1–31 the chain is Cytoplasmic; that stretch reads RVSIYSARRPLLARTHIQGRVYNFLERPTGW. A helical membrane pass occupies residues 32 to 53; that stretch reads KCFVYHFAVFLIVLVCLIFSVL. Topologically, residues 54 to 64 are extracellular; that stretch reads STIEQYVALAT. Residues 65 to 87 traverse the membrane as a helical segment; sequence GTLFWMEIVLVVFFGTEYVVRLW. Over 88–103 the chain is Cytoplasmic; that stretch reads SAGCRSKYVGVWGRLR. The chain crosses the membrane as a helical span at residues 104–129; that stretch reads FARKPISIIDLIVVLASMVVLCVGSK. Over 130 to 137 the chain is Extracellular; that stretch reads GQVFATSA. Residues 138-153 form a helical; Voltage-sensor membrane-spanning segment; sequence IRGIRFLQILRMLHVD. The segment at 149–157 is interaction with KCNE3; that stretch reads MLHVDRQGG. Residues 154–171 are Cytoplasmic-facing; that stretch reads RQGGTWRLLGSVVFIHRQ. Glutamine 155 contributes to the a 1,2-diacyl-sn-glycero-3-phospho-(1D-myo-inositol-4,5-bisphosphate) binding site. Residues 172-194 form a helical membrane-spanning segment; sequence ELITTLYIGFLGLIFSSYFVYLA. Residues 195 to 210 are Extracellular-facing; the sequence is EKDAVNESGQVEFGSY. Asparagine 200 carries N-linked (GlcNAc...) asparagine glycosylation. Residues 211 to 231 constitute an intramembrane region (pore-forming); that stretch reads ADALWWGVVTVTTIGYGDKVP. Over 232–233 the chain is Extracellular; it reads QT. The chain crosses the membrane as a helical span at residues 234 to 259; the sequence is WVGKTIASCFSVFAISFFALPAGILG. The Cytoplasmic portion of the chain corresponds to 260–582; sequence SGFALKVQQK…VPRRGPEEGS (323 aa). Positions 281–293 are interaction with CALM; that stretch reads AAASLIQTAWRCY. 2 positions are modified to phosphoserine: serine 318 and serine 320. Residues 426-440 are interaction with CALM; calcium-dependent; that stretch reads KVIRRMQYFVAKKKF. An interaction with KCNE1 C-terminus region spans residues 446–483; that stretch reads PYDVRDVIEQYSQGHLNLMVRIKELQRRLDQSIGKPSL. Positions 496–532 form a coiled coil; that stretch reads SNTIGARLNRVEDKVAQLDQRLVLITDMLQQLLSLHH. The interval 499 to 527 is interaction with AKAP9; the sequence is IGARLNRVEDKVAQLDQRLVLITDMLQQL. Residues 500–531 are C-terminal assembly domain (tetramerization); that stretch reads GARLNRVEDKVAQLDQRLVLITDMLQQLLSLH. The tract at residues 530–582 is disordered; sequence LHHGGPPGSRPPSGGGAQVQPCGPTNPELFLPGNALPTYEQLTVPRRGPEEGS.

It belongs to the potassium channel family. KQT (TC 1.A.1.15) subfamily. Kv7.1/KCNQ1 sub-subfamily. Tetramer. Heterotetramer with KCNE1; targets to the membrane raft. Interacts (via C-terminus) with CALM; forms a heterooctameric structure (with 4:4 KCNQ1:CALM stoichiometry) in a calcium-independent manner. Interacts with AKAP9; targets protein kinase A (PKA) catalytic and regulatory subunits and protein phosphatase 1 (PP1) to the KCNQ1-KCNE1 complex, allowing PKA-mediated phosphorylation and increase of delayed rectifier potassium channel activity. Interacts with KCNE2; form a heterooligomer complex that targets to the membrane raft and leading to currents with an apparently instantaneous activation, a rapid deactivation process and a linear current-voltage relationship and decreases the amplitude of the outward current. Interacts with AP2M1; mediates estrogen-induced internalization via clathrin-coated vesicles. Interacts with NEDD4L; promotes internalization and decreases I(Ks) currents. Interacts with USP2; counteracts the NEDD4L-specific down-regulation of I(Ks) and restore plasma membrane localization. Heterotetramer with KCNQ5; has a voltage-gated potassium channel activity. Interacts with KCNE3; four KCNE3 molecules are bound to one KCNQ1 tetramer (4:4 KCNQ1:KCNE3 stoichiometry); alters membrane raft localization; affects KCNQ1 structure and gating properties. Interacts with KCNE4; impairs KCNQ1 localization in lipid rafts and inhibits voltage-gated potassium channel activity. Interacts with KCNE5; impairs KCNQ1 localization in lipid rafts and only conducts current upon strong and continued depolarization. Phosphorylated by PKA; increases delayed rectifier potassium channel activity of the KCNQ1-KCNE1 complex through a macromolecular complex that includes PKA, PP1, and the targeting protein AKAP9. Post-translationally, ubiquitinated by NEDD4L; promotes internalization. The ubiquitinylated form is internalized through a clathrin-mediated endocytosis by interacting with AP2M1 and is recycled back to the cell membrane via RAB4A and RAB11A. In terms of processing, deubiquitinated by USP2; counteracts the NEDD4L-specific down-regulation of I(Ks) and restores the membrane localization.

Its subcellular location is the cell membrane. The protein localises to the cytoplasmic vesicle membrane. It is found in the early endosome. It localises to the membrane raft. The protein resides in the endoplasmic reticulum. Its subcellular location is the basolateral cell membrane. The enzyme catalyses K(+)(in) = K(+)(out). Its activity is regulated as follows. PIP2 molecule is essential to activate KCNQ channels by inducing the coupling of the voltage-sensing domain (VSD) and the pore-forming domain (PD). Upon channel activation, PIP2 disrupts the VSD-calmodulin/CALM interactions, causing the release of CALM from the VSD which triggers the opening of the gate. Calcium potentiates KCNQ1 channel current through calcium-bound CALM. Calcium-bound CALM competes with PIP2 to stabilize the channel open state. Pore-forming subunit of the voltage-gated potassium (Kv) channel involved in the regulation of cardiomyocyte excitability and important in normal development and functions of myocardium, inner ear, stomach and colon. Associates with KCNE beta subunits that modulates current kinetics. Induces a voltage-dependent by rapidly activating and slowly deactivating potassium-selective outward current. Also promotes a delayed voltage activated potassium current showing outward rectification characteristic. During beta-adrenergic receptor stimulation participates in cardiac repolarization by associating with KCNE1 to form the I(Ks) cardiac potassium current that increases the amplitude and slows down the activation kinetics of outward potassium current I(Ks). Muscarinic agonist oxotremorine-M strongly suppresses KCNQ1/KCNE1 current. When associated with KCNE3, forms the potassium channel that is important for cyclic AMP-stimulated intestinal secretion of chloride ions. This interaction with KCNE3 is reduced by 17beta-estradiol, resulting in the reduction of currents. During conditions of increased substrate load, maintains the driving force for proximal tubular and intestinal sodium ions absorption, gastric acid secretion, and cAMP-induced jejunal chloride ions secretion. Allows the provision of potassium ions to the luminal membrane of the secretory canaliculus in the resting state as well as during stimulated acid secretion. When associated with KCNE2, forms a heterooligomer complex leading to currents with an apparently instantaneous activation, a rapid deactivation process and a linear current-voltage relationship and decreases the amplitude of the outward current. When associated with KCNE4, inhibits voltage-gated potassium channel activity. When associated with KCNE5, this complex only conducts current upon strong and continued depolarization. Also forms a heterotetramer with KCNQ5 that has a voltage-gated potassium channel activity. Binds with phosphatidylinositol 4,5-bisphosphate. In Felis catus (Cat), this protein is Potassium voltage-gated channel subfamily KQT member 1.